Consider the following 367-residue polypeptide: tRNA/tmRNA (uracil-C(5))-methyltransferase (367 aa).

S-adenosyl-L-methionine contacts are provided by Gln190, Tyr218, Asn223, Glu239, and Asp299. Cys324 serves as the catalytic Nucleophile. Glu358 functions as the Proton acceptor in the catalytic mechanism.

The protein belongs to the class I-like SAM-binding methyltransferase superfamily. RNA M5U methyltransferase family. TrmA subfamily.

The catalysed reaction is uridine(54) in tRNA + S-adenosyl-L-methionine = 5-methyluridine(54) in tRNA + S-adenosyl-L-homocysteine + H(+). It catalyses the reaction uridine(341) in tmRNA + S-adenosyl-L-methionine = 5-methyluridine(341) in tmRNA + S-adenosyl-L-homocysteine + H(+). In terms of biological role, dual-specificity methyltransferase that catalyzes the formation of 5-methyluridine at position 54 (m5U54) in all tRNAs, and that of position 341 (m5U341) in tmRNA (transfer-mRNA). The chain is tRNA/tmRNA (uracil-C(5))-methyltransferase from Erwinia tasmaniensis (strain DSM 17950 / CFBP 7177 / CIP 109463 / NCPPB 4357 / Et1/99).